The primary structure comprises 145 residues: Large ribosomal subunit protein uL13 (145 aa).

Belongs to the universal ribosomal protein uL13 family. As to quaternary structure, part of the 50S ribosomal subunit.

Functionally, this protein is one of the early assembly proteins of the 50S ribosomal subunit, although it is not seen to bind rRNA by itself. It is important during the early stages of 50S assembly. The polypeptide is Large ribosomal subunit protein uL13 (Bacillus pumilus (strain SAFR-032)).